The chain runs to 131 residues: Synaptobrevin-like protein (131 aa).

Residues 1–81 (MLHITTMTDK…KRKFWWKNCK (81 aa)) lie on the Cytoplasmic side of the membrane. The v-SNARE coiled-coil homology domain occupies 18–78 (RLQQTQAQVN…GKLKRKFWWK (61 aa)). The chain crosses the membrane as a helical; Anchor for type IV membrane protein span at residues 82–102 (MLAVLGVLVVILIIVLIVWVV). At 103–131 (SEQKNKVEQSEHSSHHLVMDNSSHLLSEQ) the chain is on the vesicular side. The interval 112 to 131 (SEHSSHHLVMDNSSHLLSEQ) is disordered. Polar residues predominate over residues 122–131 (DNSSHLLSEQ).

This sequence belongs to the synaptobrevin family.

Its subcellular location is the cytoplasmic vesicle. The protein localises to the secretory vesicle. The protein resides in the synaptic vesicle membrane. It localises to the synapse. It is found in the synaptosome. Functionally, unknown, but synaptobrevins are presumed to be involved in targeting and fusion of synaptic vesicles with the presynaptic membrane as well as in neurotransmitter release. The protein is Synaptobrevin-like protein of Schistosoma mansoni (Blood fluke).